The following is a 156-amino-acid chain: 6,7-dimethyl-8-ribityllumazine synthase (156 aa).

Residues Phe-22, 57-59 (AVE), and 81-83 (CVI) contribute to the 5-amino-6-(D-ribitylamino)uracil site. 86-87 (GT) provides a ligand contact to (2S)-2-hydroxy-3-oxobutyl phosphate. His-89 functions as the Proton donor in the catalytic mechanism. Residue Phe-114 participates in 5-amino-6-(D-ribitylamino)uracil binding. Arg-128 contacts (2S)-2-hydroxy-3-oxobutyl phosphate.

This sequence belongs to the DMRL synthase family. In terms of assembly, forms an icosahedral capsid composed of 60 subunits, arranged as a dodecamer of pentamers.

The enzyme catalyses (2S)-2-hydroxy-3-oxobutyl phosphate + 5-amino-6-(D-ribitylamino)uracil = 6,7-dimethyl-8-(1-D-ribityl)lumazine + phosphate + 2 H2O + H(+). It functions in the pathway cofactor biosynthesis; riboflavin biosynthesis; riboflavin from 2-hydroxy-3-oxobutyl phosphate and 5-amino-6-(D-ribitylamino)uracil: step 1/2. Catalyzes the formation of 6,7-dimethyl-8-ribityllumazine by condensation of 5-amino-6-(D-ribitylamino)uracil with 3,4-dihydroxy-2-butanone 4-phosphate. This is the penultimate step in the biosynthesis of riboflavin. In Tolumonas auensis (strain DSM 9187 / NBRC 110442 / TA 4), this protein is 6,7-dimethyl-8-ribityllumazine synthase.